A 337-amino-acid chain; its full sequence is Glyceraldehyde-3-phosphate dehydrogenase 2, cytosolic (337 aa).

The tract at residues 1–151 (MGKIKIGING…YTSDVNIVSN (151 aa)) is binding to NAD. NAD(+) is bound by residues 13–14 (RI), Asp-35, and Arg-82. Residues 152–337 (ASCTTNCLAP…DLIRHMFKTQ (186 aa)) form a catalytic region. D-glyceraldehyde 3-phosphate is bound by residues 153–155 (SCT), Thr-184, 213–214 (TG), and Arg-236. Cys-154 acts as the Nucleophile in catalysis. Residue Asn-318 coordinates NAD(+).

The protein belongs to the glyceraldehyde-3-phosphate dehydrogenase family. Homotetramer. Developing seeds, seedling roots and shoots, and embryo.

It is found in the cytoplasm. The catalysed reaction is D-glyceraldehyde 3-phosphate + phosphate + NAD(+) = (2R)-3-phospho-glyceroyl phosphate + NADH + H(+). Its pathway is carbohydrate degradation; glycolysis; pyruvate from D-glyceraldehyde 3-phosphate: step 1/5. In terms of biological role, key enzyme in glycolysis that catalyzes the first step of the pathway by converting D-glyceraldehyde 3-phosphate (G3P) into 3-phospho-D-glyceroyl phosphate. Essential for the maintenance of cellular ATP levels and carbohydrate metabolism. The protein is Glyceraldehyde-3-phosphate dehydrogenase 2, cytosolic (GAPC2) of Zea mays (Maize).